A 963-amino-acid polypeptide reads, in one-letter code: MAGNDNWINSYLDAILDAGKAAIGGDRPSLLLRERGHFSPARYFVEEVITGYDETDLYKTWLRANAMRSPQERNTRLENMTWRIWNLARKKKEFEKEEACRLLKRQPEAEKLRTDTNADMSEDLFEGEKGEDAGDPSVAYGDSTTGSSPKTSSIDKLYIVLISLHGLVRGENMELGRDSDTGGQVKYVVELAKALSSSPGVYRVDLLTRQILAPNFDRSYGEPTEMLVSTSFKNSKQEKGENSGAYIIRIPFGPKDKYLAKEHLWPFIQEFVDGALGHIVRMSKTIGEEIGCGHPVWPAVIHGHYASAGIAAALLSGSLNIPMAFTGHFLGKDKLEGLLKQGRHSREQINMTYKIMCRIEAEELSLDASEIVIASTRQEIEEQWNLYDGFEVILARKLRARVKRGANCYGRYMPRMVIIPPGVEFGHIIHDFEMDGEEENPCPASEDPPIWSQIMRFFTNPRKPMILAVARPYPEKNITSLVKAFGECRPLRELANLTLIMGNREAISKMNNMSAAVLTSVLTLIDEYDLYGQVAYPKHHKHSEVPDIYRLAARTKGAFVNVAYFEQFGVTLIEAAMNGLPIIATKNGAPVEINQVLNNGLLVDPHDQNAIADALYKLLSDKQLWSRCRENGLKNIHQFSWPEHCKNYLSRILTLGPRSPAIGGKQEQKAPISGRKHIIVISVDSVNKEDLVRIIRNTIEVTRTEKMSGSTGFVLSTSLTISEIRSLLVSAGMLPTVFDAFICNSGSNIYYPLYSGDTPSSSQVTPAIDQNHQAHIEYRWGGEGLRKYLVKWATSVVERKGRIERQIIFEDPEHSSTYCLAFRVVNPNHLPPLKELRKLMRIQSLRCNALYNHSATRLSVVPIHASRSQALRYLCIRWGIELPNVAVLVGESGDSDYEELLGGLHRTVILKGEFNIPANRIHTVRRYPLQDVVALDSSNIIGIEGYSTDDMKSALQQIGVLTQ.

Positions 111-150 (KLRTDTNADMSEDLFEGEKGEDAGDPSVAYGDSTTGSSPK) are disordered.

It belongs to the glycosyltransferase 1 family. In terms of assembly, homodimer or homotetramer. As to expression, expressed in germinating seeds.

It carries out the reaction beta-D-fructose 6-phosphate + UDP-alpha-D-glucose = sucrose 6(F)-phosphate + UDP + H(+). Its pathway is glycan biosynthesis; sucrose biosynthesis; sucrose from D-fructose 6-phosphate and UDP-alpha-D-glucose: step 1/2. Its activity is regulated as follows. Activity is regulated by phosphorylation and moderated by concentration of metabolites and light. Its function is as follows. Plays a role in photosynthetic sucrose synthesis by catalyzing the rate-limiting step of sucrose biosynthesis from UDP-glucose and fructose- 6-phosphate. Involved in the regulation of carbon partitioning in the leaves of plants. May regulate the synthesis of sucrose and therefore play a major role as a limiting factor in the export of photoassimilates out of the leaf. Plays a role for sucrose availability that is essential for plant growth and fiber elongation. The polypeptide is Probable sucrose-phosphate synthase 2 (SPS2) (Oryza sativa subsp. japonica (Rice)).